The primary structure comprises 104 residues: A-type ATP synthase subunit F (104 aa).

Belongs to the V-ATPase F subunit family. Has multiple subunits with at least A(3), B(3), C, D, E, F, H, I and proteolipid K(x).

Its subcellular location is the cell membrane. Component of the A-type ATP synthase that produces ATP from ADP in the presence of a proton gradient across the membrane. The sequence is that of A-type ATP synthase subunit F from Thermoplasma acidophilum (strain ATCC 25905 / DSM 1728 / JCM 9062 / NBRC 15155 / AMRC-C165).